The chain runs to 256 residues: NAD(P)H-hydrate epimerase (256 aa).

Residues 1-18 (MADPRRDPAAESKDRPST) are compositionally biased toward basic and acidic residues. Residues 1-21 (MADPRRDPAAESKDRPSTERV) are disordered. One can recognise a YjeF N-terminal domain in the interval 23–229 (AYTADAVRAA…DLGLEPYLRR (207 aa)). A (6S)-NADPHX-binding site is contributed by 74 to 78 (DNGGD). K(+)-binding residues include N75 and D135. (6S)-NADPHX is bound by residues 139–147 (GIGRLADRR) and D172. S175 contacts K(+).

Belongs to the NnrE/AIBP family. K(+) serves as cofactor.

The enzyme catalyses (6R)-NADHX = (6S)-NADHX. The catalysed reaction is (6R)-NADPHX = (6S)-NADPHX. Functionally, catalyzes the epimerization of the S- and R-forms of NAD(P)HX, a damaged form of NAD(P)H that is a result of enzymatic or heat-dependent hydration. This is a prerequisite for the S-specific NAD(P)H-hydrate dehydratase to allow the repair of both epimers of NAD(P)HX. The protein is NAD(P)H-hydrate epimerase of Microbacterium testaceum (strain StLB037).